A 262-amino-acid chain; its full sequence is Ribose-5-phosphate isomerase A (262 aa).

Substrate is bound by residues 33-36, 89-92, and 102-105; these read TGST, DGAD, and KGGG. Glu-111 (proton acceptor) is an active-site residue. Lys-129 is a binding site for substrate.

This sequence belongs to the ribose 5-phosphate isomerase family. As to quaternary structure, homodimer.

The enzyme catalyses aldehydo-D-ribose 5-phosphate = D-ribulose 5-phosphate. The protein operates within carbohydrate degradation; pentose phosphate pathway; D-ribose 5-phosphate from D-ribulose 5-phosphate (non-oxidative stage): step 1/1. Its function is as follows. Catalyzes the reversible conversion of ribose-5-phosphate to ribulose 5-phosphate. This Ruegeria sp. (strain TM1040) (Silicibacter sp.) protein is Ribose-5-phosphate isomerase A.